The following is a 1468-amino-acid chain: Neuropathy target esterase sws (1468 aa).

Topologically, residues 1–34 (MDVLEMLRASASGSYNTIFSDAWCQYVSKQITAT) are lumenal. The chain crosses the membrane as a helical span at residues 35-55 (VYMYCALVMMSLLFIAWFLYF). Residues 56-1468 (KRMARLRLRD…RSSPNNETKN (1413 aa)) are Cytoplasmic-facing. Residue 174–301 (IFGHFEKPVF…IRVIQVIMIR (128 aa)) participates in a nucleoside 3',5'-cyclic phosphate binding. Composition is skewed to polar residues over residues 332 to 348 (TMSG…SRQA) and 357 to 366 (NQLNLMQSAA). The interval 332–411 (TMSGPINSQT…DGSFHGTTNL (80 aa)) is disordered. Serine 442 and serine 451 each carry phosphoserine. A nucleoside 3',5'-cyclic phosphate-binding positions include 480 to 607 (ELGL…VVRR) and 596 to 723 (IVLD…LSHR). Residues 950–1116 (LVLGGGGARG…VNNLPGHLWR (167 aa)) enclose the PNPLA domain. The short motif at 954–959 (GGGARG) is the GXGXXG element. Positions 981–985 (GVSIG) match the GXSXG motif. Serine 983 acts as the Nucleophile in catalysis. The active-site Proton acceptor is aspartate 1103. The short motif at 1103–1105 (DGG) is the DGA/G element. Position 1197 is a phosphoserine (serine 1197). The segment at 1368–1468 (ERKMDKSTQS…RSSPNNETKN (101 aa)) is disordered. Over residues 1374–1383 (STQSSPPTSS) the composition is skewed to low complexity. Residues 1385–1395 (TDMRGKEEAKH) are compositionally biased toward basic and acidic residues. Residues 1419–1441 (TQTGQEQELQQQQKLQQLQQDQG) show a composition bias toward low complexity. Residues 1446-1459 (QLVDKDKEEDKENR) show a composition bias toward basic and acidic residues.

The protein belongs to the NTE family. Interacts with Pka-C3; interaction inhibits the catalytic function of Pka-C3 and the esterase activity of sws.

It localises to the endoplasmic reticulum membrane. The catalysed reaction is a 1-acyl-sn-glycero-3-phosphocholine + H2O = sn-glycerol 3-phosphocholine + a fatty acid + H(+). Its function is as follows. Phospholipase B that deacylates intracellular phosphatidylcholine (PtdCho), generating glycerophosphocholine (GroPtdCho). This deacylation occurs at both sn-2 and sn-1 positions of PtdCho. Its specific chemical modification by certain organophosphorus (OP) compounds leads to distal axonopathy. Plays a role in the signaling mechanism between neurons and glia that regulates glia wrapping during development of the adult brain. Essential for membrane lipid homeostasis and cell survival in both neurons and glia of the adult brain. This is Neuropathy target esterase sws from Drosophila sechellia (Fruit fly).